The primary structure comprises 325 residues: Cytochrome c biogenesis protein CcsA (325 aa).

Transmembrane regions (helical) follow at residues 12-32, 45-65, 72-92, 100-120, 145-165, 231-251, 264-281, and 293-313; these read HISF…LLFV, GMII…VFSG, LYES…VPYF, LNTI…SGLL, MILG…ILVI, TISL…VWAN, ETWA…LHTR, and IVAS…NLLG.

Belongs to the CcmF/CycK/Ccl1/NrfE/CcsA family. In terms of assembly, may interact with Ccs1.

Its subcellular location is the plastid. It localises to the chloroplast thylakoid membrane. Required during biogenesis of c-type cytochromes (cytochrome c6 and cytochrome f) at the step of heme attachment. This is Cytochrome c biogenesis protein CcsA from Glycine max (Soybean).